Reading from the N-terminus, the 306-residue chain is Homoserine O-acetyltransferase (306 aa).

The active-site Acyl-thioester intermediate is cysteine 142. Positions 163 and 194 each coordinate substrate. Histidine 237 serves as the catalytic Proton acceptor. Residue glutamate 239 is part of the active site. Arginine 251 is a binding site for substrate.

Belongs to the MetA family.

Its subcellular location is the cytoplasm. The enzyme catalyses L-homoserine + acetyl-CoA = O-acetyl-L-homoserine + CoA. It participates in amino-acid biosynthesis; L-methionine biosynthesis via de novo pathway; O-acetyl-L-homoserine from L-homoserine: step 1/1. Transfers an acetyl group from acetyl-CoA to L-homoserine, forming acetyl-L-homoserine. This chain is Homoserine O-acetyltransferase, found in Clostridium tetani (strain Massachusetts / E88).